We begin with the raw amino-acid sequence, 260 residues long: Spectinomycin 9-adenylyltransferase (260 aa).

The catalysed reaction is spectinomycin + ATP = 9-O-adenylylspectinomycin + diphosphate. Mediates bacterial resistance to the antibiotic spectinomycin but not streptomycin. In Staphylococcus aureus (strain Mu50 / ATCC 700699), this protein is Spectinomycin 9-adenylyltransferase (ant1).